Reading from the N-terminus, the 247-residue chain is ATP synthase subunit a, chloroplastic (247 aa).

Transmembrane regions (helical) follow at residues 38–58 (QVLI…SIAV), 95–115 (VPFI…GALL), 134–154 (INTT…AGLT), 199–219 (LVVV…VMFL), and 220–240 (GLFT…AYIG).

It belongs to the ATPase A chain family. As to quaternary structure, F-type ATPases have 2 components, CF(1) - the catalytic core - and CF(0) - the membrane proton channel. CF(1) has five subunits: alpha(3), beta(3), gamma(1), delta(1), epsilon(1). CF(0) has four main subunits: a, b, b' and c.

It localises to the plastid. The protein localises to the chloroplast thylakoid membrane. In terms of biological role, key component of the proton channel; it plays a direct role in the translocation of protons across the membrane. This chain is ATP synthase subunit a, chloroplastic, found in Eucalyptus globulus subsp. globulus (Tasmanian blue gum).